We begin with the raw amino-acid sequence, 772 residues long: Tubulin monoglycylase TTLL3 (772 aa).

Positions 50–81 (PTLLPPQKDLDSSAMGDSDTTEDEDEDEDEEF) are disordered. The span at 68–81 (DTTEDEDEDEDEEF) shows a compositional bias: acidic residues. Residues 151-510 (ARNVLKLVVK…RMLDRNCDTG (360 aa)) form the TTL domain. ATP-binding positions include Lys-283, 289-290 (RG), 321-324 (QKYI), 334-336 (KFD), and 378-379 (CN). Arg-289 contributes to the a protein binding site. An L-glutamate-binding site is contributed by Ser-381. Residues Asp-456, Glu-469, and Asn-471 each coordinate Mg(2+). Position 469 (Glu-469) interacts with ATP.

It depends on Mg(2+) as a cofactor. As to expression, expressed in brain, heart, kidney, testis, liver, lung, muscle, spleen, trachea and colon.

The protein localises to the cytoplasm. It is found in the cytoskeleton. It localises to the cell projection. Its subcellular location is the cilium. The protein resides in the cilium axoneme. The protein localises to the flagellum axoneme. It catalyses the reaction L-glutamyl-[protein] + glycine + ATP = glycyl-L-glutamyl-[protein] + ADP + phosphate + H(+). Functionally, monoglycylase which modifies alpha- and beta-tubulin, adding a single glycine on the gamma-carboxyl groups of specific glutamate residues to generate monoglycine side chains within the C-terminal tail of tubulin. Not involved in elongation step of the polyglycylation reaction. Preferentially glycylates a beta-tail peptide over the alpha-tail, although shifts its preference toward alpha-tail as beta-tail glutamylation increases. Competes with polyglutamylases for modification site on beta-tubulin substrate, thereby creating an anticorrelation between glycylation and glutamylation reactions. Together with TTLL8, mediates microtubule glycylation of primary and motile cilia, which is essential for their stability and maintenance. Involved in microtubule glycylation of primary cilia in colon which controls cell proliferation of epithelial cells and plays an essential role in colon cancer development. Together with TTLL8, glycylates sperm flagella which regulates axonemal dynein motor activity, thereby controlling flagellar beat, directional sperm swimming and male fertility. This Homo sapiens (Human) protein is Tubulin monoglycylase TTLL3.